Reading from the N-terminus, the 493-residue chain is Glutamyl-tRNA(Gln) amidotransferase subunit A (493 aa).

Residues lysine 79 and serine 159 each act as charge relay system in the active site. The Acyl-ester intermediate role is filled by serine 183.

The protein belongs to the amidase family. GatA subfamily. Heterotrimer of A, B and C subunits.

It carries out the reaction L-glutamyl-tRNA(Gln) + L-glutamine + ATP + H2O = L-glutaminyl-tRNA(Gln) + L-glutamate + ADP + phosphate + H(+). Allows the formation of correctly charged Gln-tRNA(Gln) through the transamidation of misacylated Glu-tRNA(Gln) in organisms which lack glutaminyl-tRNA synthetase. The reaction takes place in the presence of glutamine and ATP through an activated gamma-phospho-Glu-tRNA(Gln). The protein is Glutamyl-tRNA(Gln) amidotransferase subunit A of Brucella canis (strain ATCC 23365 / NCTC 10854 / RM-666).